Here is a 473-residue protein sequence, read N- to C-terminus: Glutamyl-tRNA reductase (473 aa).

Substrate-binding positions include 49-52, Ser-109, 114-116, and Gln-120; these read TCNR and ESQ. Catalysis depends on Cys-50, which acts as the Nucleophile. The interval 196 to 215 is disordered; the sequence is LDGGGVAAEGPRHAVTPEPP. 226-231 lines the NADP(+) pocket; the sequence is GAGAVG.

Belongs to the glutamyl-tRNA reductase family. In terms of assembly, homodimer.

It catalyses the reaction (S)-4-amino-5-oxopentanoate + tRNA(Glu) + NADP(+) = L-glutamyl-tRNA(Glu) + NADPH + H(+). The protein operates within porphyrin-containing compound metabolism; protoporphyrin-IX biosynthesis; 5-aminolevulinate from L-glutamyl-tRNA(Glu): step 1/2. Its function is as follows. Catalyzes the NADPH-dependent reduction of glutamyl-tRNA(Glu) to glutamate 1-semialdehyde (GSA). This is Glutamyl-tRNA reductase from Frankia casuarinae (strain DSM 45818 / CECT 9043 / HFP020203 / CcI3).